The chain runs to 346 residues: Uroporphyrinogen decarboxylase (346 aa).

Substrate contacts are provided by residues 21 to 25, aspartate 71, tyrosine 146, serine 201, and histidine 316; that span reads RQAGR.

Belongs to the uroporphyrinogen decarboxylase family. Homodimer.

The protein localises to the cytoplasm. It carries out the reaction uroporphyrinogen III + 4 H(+) = coproporphyrinogen III + 4 CO2. It participates in porphyrin-containing compound metabolism; protoporphyrin-IX biosynthesis; coproporphyrinogen-III from 5-aminolevulinate: step 4/4. Catalyzes the decarboxylation of four acetate groups of uroporphyrinogen-III to yield coproporphyrinogen-III. The polypeptide is Uroporphyrinogen decarboxylase (Rickettsia africae (strain ESF-5)).